Reading from the N-terminus, the 524-residue chain is Phosphoenolpyruvate carboxykinase (ATP) (524 aa).

Substrate-binding residues include R52, Y188, and K194. ATP is bound by residues K194, H213, and 229–237 (GLSGTGKTT). K194 and H213 together coordinate Mn(2+). D250 provides a ligand contact to Mn(2+). ATP contacts are provided by E278, R314, and T439. R314 provides a ligand contact to substrate.

The protein belongs to the phosphoenolpyruvate carboxykinase (ATP) family. Requires Mn(2+) as cofactor.

It localises to the cytoplasm. It catalyses the reaction oxaloacetate + ATP = phosphoenolpyruvate + ADP + CO2. Its pathway is carbohydrate biosynthesis; gluconeogenesis. Involved in the gluconeogenesis. Catalyzes the conversion of oxaloacetate (OAA) to phosphoenolpyruvate (PEP) through direct phosphoryl transfer between the nucleoside triphosphate and OAA. This Campylobacter jejuni subsp. doylei (strain ATCC BAA-1458 / RM4099 / 269.97) protein is Phosphoenolpyruvate carboxykinase (ATP).